Here is a 260-residue protein sequence, read N- to C-terminus: Thaumatin-like protein 1 (260 aa).

The N-terminal stretch at 1–32 (MIITVLHSHVSFYFIILSFLFFHALHLVGSDG) is a signal peptide. 8 disulfides stabilise this stretch: cysteine 41–cysteine 255, cysteine 89–cysteine 100, cysteine 105–cysteine 112, cysteine 166–cysteine 245, cysteine 171–cysteine 228, cysteine 179–cysteine 191, cysteine 195–cysteine 204, and cysteine 205–cysteine 215.

The protein belongs to the thaumatin family. In terms of tissue distribution, expressed only in roots.

Functionally, involved in local responses of roots to colonization by non-pathogenic plant growth-promoting rhizobacteria (PGPR) fluorescent Pseudomonas spp., but seems to not being required for the establishment of subsequent induced systemic resistance (ISR). The sequence is that of Thaumatin-like protein 1 from Arabidopsis thaliana (Mouse-ear cress).